Here is a 101-residue protein sequence, read N- to C-terminus: Large ribosomal subunit protein uL24 (101 aa).

This sequence belongs to the universal ribosomal protein uL24 family. In terms of assembly, part of the 50S ribosomal subunit.

One of two assembly initiator proteins, it binds directly to the 5'-end of the 23S rRNA, where it nucleates assembly of the 50S subunit. In terms of biological role, one of the proteins that surrounds the polypeptide exit tunnel on the outside of the subunit. The protein is Large ribosomal subunit protein uL24 of Streptococcus thermophilus (strain CNRZ 1066).